A 176-amino-acid polypeptide reads, in one-letter code: Peptide methionine sulfoxide reductase MsrA (176 aa).

C10 is an active-site residue.

This sequence belongs to the MsrA Met sulfoxide reductase family.

It carries out the reaction L-methionyl-[protein] + [thioredoxin]-disulfide + H2O = L-methionyl-(S)-S-oxide-[protein] + [thioredoxin]-dithiol. The enzyme catalyses [thioredoxin]-disulfide + L-methionine + H2O = L-methionine (S)-S-oxide + [thioredoxin]-dithiol. Its function is as follows. Has an important function as a repair enzyme for proteins that have been inactivated by oxidation. Catalyzes the reversible oxidation-reduction of methionine sulfoxide in proteins to methionine. In Leptospira borgpetersenii serovar Hardjo-bovis (strain JB197), this protein is Peptide methionine sulfoxide reductase MsrA.